The primary structure comprises 176 residues: Inorganic pyrophosphatase (176 aa).

The substrate site is built by Lys-30, Arg-44, and Tyr-56. Asp-66, Asp-71, and Asp-103 together coordinate Mg(2+). Tyr-142 lines the substrate pocket.

Belongs to the PPase family. Homohexamer. The cofactor is Mg(2+).

It is found in the cytoplasm. It catalyses the reaction diphosphate + H2O = 2 phosphate + H(+). In terms of biological role, catalyzes the hydrolysis of inorganic pyrophosphate (PPi) forming two phosphate ions. The polypeptide is Inorganic pyrophosphatase (Brucella melitensis biotype 1 (strain ATCC 23456 / CCUG 17765 / NCTC 10094 / 16M)).